Consider the following 617-residue polypeptide: Dihydroxy-acid dehydratase (617 aa).

D81 lines the Mg(2+) pocket. C122 serves as a coordination point for [2Fe-2S] cluster. Positions 123 and 124 each coordinate Mg(2+). At K124 the chain carries N6-carboxylysine. C195 contacts [2Fe-2S] cluster. Residue E490 coordinates Mg(2+). The active-site Proton acceptor is S516.

It belongs to the IlvD/Edd family. In terms of assembly, homodimer. [2Fe-2S] cluster serves as cofactor. Mg(2+) is required as a cofactor.

The enzyme catalyses (2R)-2,3-dihydroxy-3-methylbutanoate = 3-methyl-2-oxobutanoate + H2O. It carries out the reaction (2R,3R)-2,3-dihydroxy-3-methylpentanoate = (S)-3-methyl-2-oxopentanoate + H2O. Its pathway is amino-acid biosynthesis; L-isoleucine biosynthesis; L-isoleucine from 2-oxobutanoate: step 3/4. The protein operates within amino-acid biosynthesis; L-valine biosynthesis; L-valine from pyruvate: step 3/4. Its function is as follows. Functions in the biosynthesis of branched-chain amino acids. Catalyzes the dehydration of (2R,3R)-2,3-dihydroxy-3-methylpentanoate (2,3-dihydroxy-3-methylvalerate) into 2-oxo-3-methylpentanoate (2-oxo-3-methylvalerate) and of (2R)-2,3-dihydroxy-3-methylbutanoate (2,3-dihydroxyisovalerate) into 2-oxo-3-methylbutanoate (2-oxoisovalerate), the penultimate precursor to L-isoleucine and L-valine, respectively. The protein is Dihydroxy-acid dehydratase of Acidiphilium cryptum (strain JF-5).